A 727-amino-acid polypeptide reads, in one-letter code: MSIFNKVTKSFQWGDKTVVMETGEIARQASGAVLVNIDDTVVLATVVGSKQAKPGQDFFPLTVDYIEKTYAAGKIPGSFFKREAKPSELETLTSRLIDRPIRPLFPEGFYNEVHVVIHTISLNPEVDADIAAMIAVSAALSVSGIPFNGPIGAARVGYVNGEYVLNPGQTARKSSQLDLVVAGTEAAVLMVESEAQQLSEEIMLGAVVFGHEQGKVAINAIHELVRDAGKPVWDWQPPAKDETFIAKVTALAEGKLRAAYQIRSKQARTQALREASASVLESLKGEGVEFDAVKVEALLFDIEAKIVRSQILAGEPRIDGRDTRTVRPIEIRNSVLPRTHGSALFTRGETQALVVSTLGTERDAQRIDALAGEFEDRFIFHYNMPPFATGEVGRMGSTKRREIGHGRLAKRALVACLPSKDEFPYTIRVVSEITESNGSSSMASVCGGCLSLMDAGVPMKAHVAGIAMGLIKEDNRFAVLTDILGDEDHLGDMDFKVAGTTNGITALQMDIKIQGITKEIMQVALAQAKEARMHILGKMQEAMGEAKTEISSFAPKLYTMKINPEKIRDVIGKGGATIRALTDETGCQINIEEDGTITIAATEAAKADEAKRRIEEITAEVEVGKIYEGPVTKILDFGALINLLPGKDGLLHISQIAHERVEKVGDYLQEGQIVKVKVLETDDKGRVKLSMKALADRPAGDSGRPAPAERGERRERRDGGASEQQQQ.

Mg(2+) is bound by residues D488 and D494. Positions 555 to 614 (PKLYTMKINPEKIRDVIGKGGATIRALTDETGCQINIEEDGTITIAATEAAKADEAKRRI) constitute a KH domain. The S1 motif domain maps to 624–692 (GKIYEGPVTK…DKGRVKLSMK (69 aa)). Positions 691 to 727 (MKALADRPAGDSGRPAPAERGERRERRDGGASEQQQQ) are disordered. Residues 707 to 720 (PAERGERRERRDGG) show a composition bias toward basic and acidic residues.

Belongs to the polyribonucleotide nucleotidyltransferase family. It depends on Mg(2+) as a cofactor.

The protein localises to the cytoplasm. It catalyses the reaction RNA(n+1) + phosphate = RNA(n) + a ribonucleoside 5'-diphosphate. Its function is as follows. Involved in mRNA degradation. Catalyzes the phosphorolysis of single-stranded polyribonucleotides processively in the 3'- to 5'-direction. This chain is Polyribonucleotide nucleotidyltransferase, found in Acidovorax sp. (strain JS42).